A 382-amino-acid polypeptide reads, in one-letter code: Kelch domain-containing protein 3 (382 aa).

5 Kelch repeats span residues 25–77, 88–138, 139–189, 191–249, and 251–301; these read RVYS…PYMR, TVLL…VLGK, IMYI…TMLG, HMYV…GYNG, and LYIF…IVGD.

As to quaternary structure, component of a CRL2(KLHDC3) complex, also named ECS(KLHDC3) complex, composed of CUL2, Elongin BC (ELOB and ELOC), RBX1 and substrate-specific adapter KLHDC3. May form oligomers as a KLHDC3-ELOB-ELOC complex; this interaction is likely autoinhibitory for the E3 ligase complex.

It localises to the cytoplasm. The protein operates within protein modification; protein ubiquitination. In terms of biological role, substrate-recognition component of a Cul2-RING (CRL2) E3 ubiquitin-protein ligase complex of the DesCEND (destruction via C-end degrons) pathway, which recognizes a C-degron located at the extreme C terminus of target proteins, leading to their ubiquitination and degradation. The C-degron recognized by the DesCEND pathway is usually a motif of less than ten residues and can be present in full-length proteins, truncated proteins or proteolytically cleaved forms. The CRL2(KLHDC3) complex specifically recognizes proteins with a glycine (Gly) at the C-terminus, leading to their ubiquitination and degradation: recognizes the C-terminal -Arg-(Xaa)n-Arg-Gly, -Arg-(Xaa)n-Lys-Gly, and -Arg-(Xaa)n-Gln-Gly degrons. The CRL2(KLHDC3) complex mediates ubiquitination and degradation of truncated SELENOV and SEPHS2 selenoproteins produced by failed UGA/Sec decoding, which end with a glycine. May be involved in meiotic recombination process. This Homo sapiens (Human) protein is Kelch domain-containing protein 3.